Consider the following 822-residue polypeptide: Dextranase (822 aa).

An N-terminal signal peptide occupies residues 1 to 38 (MTVNLTLQHASEIIGQDNVDLTLAAGASAKVSNLTVAS). Disordered regions lie at residues 607-669 (EPVT…VDEL) and 683-788 (ETAH…ETTS). A compositionally biased stretch (low complexity) spans 619 to 636 (NTVTSEASSETAKSENTT). Over residues 693–705 (SVSNTDQGTVASD) the composition is skewed to polar residues. The span at 706-761 (SITTPASEAASTAASTVSSEVSESVTVSSEPSETENSSEASTSESATPTTTAISES) shows a compositional bias: low complexity. A compositionally biased stretch (polar residues) spans 771-788 (LTESESQASTSLVSETTS).

The protein belongs to the glycosyl hydrolase 66 family.

The catalysed reaction is Endohydrolysis of (1-&gt;6)-alpha-D-glucosidic linkages in dextran.. This is Dextranase (dex) from Streptococcus salivarius.